Here is a 105-residue protein sequence, read N- to C-terminus: MAANKTLPTYFCRNCENPLALGEDLISKKFVGASGPAFMFSHAMNVVVGPKIGRKLITGSYVVADVMCSKCGETLGWKYVETFDLKQRYKEGMFVIEKLKLTKRY.

Residues 8 to 105 (PTYFCRNCEN…IEKLKLTKRY (98 aa)) form the Yippee domain. Zn(2+) contacts are provided by Cys-12, Cys-15, Cys-68, and Cys-71.

The protein belongs to the yippee family.

In Arabidopsis thaliana (Mouse-ear cress), this protein is Protein yippee-like At4g27740.